The following is a 236-amino-acid chain: 2-C-methyl-D-erythritol 4-phosphate cytidylyltransferase (236 aa).

It belongs to the IspD/TarI cytidylyltransferase family. IspD subfamily. Homodimer.

The enzyme catalyses 2-C-methyl-D-erythritol 4-phosphate + CTP + H(+) = 4-CDP-2-C-methyl-D-erythritol + diphosphate. The protein operates within isoprenoid biosynthesis; isopentenyl diphosphate biosynthesis via DXP pathway; isopentenyl diphosphate from 1-deoxy-D-xylulose 5-phosphate: step 2/6. Functionally, catalyzes the formation of 4-diphosphocytidyl-2-C-methyl-D-erythritol from CTP and 2-C-methyl-D-erythritol 4-phosphate (MEP). This is 2-C-methyl-D-erythritol 4-phosphate cytidylyltransferase from Salmonella typhimurium (strain LT2 / SGSC1412 / ATCC 700720).